Reading from the N-terminus, the 86-residue chain is Large ribosomal subunit protein uL24c (86 aa).

Belongs to the universal ribosomal protein uL24 family. In terms of assembly, part of the 50S ribosomal subunit.

Its subcellular location is the plastid. The protein resides in the chloroplast. Its function is as follows. One of two assembly initiator proteins, it binds directly to the 5'-end of the 23S rRNA, where it nucleates assembly of the 50S subunit. The protein is Large ribosomal subunit protein uL24c (rpl24) of Heterosigma akashiwo (strain NIES-293 / 8280G21-1).